A 206-amino-acid chain; its full sequence is Carbonic anhydrase (206 aa).

Lys-11 is covalently cross-linked (Isoglutamyl lysine isopeptide (Lys-Gln) (interchain with Q-Cter in protein Pup)). Zn(2+)-binding residues include Cys-51, Asp-53, His-104, and Cys-107.

The protein belongs to the beta-class carbonic anhydrase family. Homotetramer. Requires Zn(2+) as cofactor.

It catalyses the reaction hydrogencarbonate + H(+) = CO2 + H2O. Its function is as follows. Catalyzes the reversible hydration of carbon dioxide to form bicarbonate. The polypeptide is Carbonic anhydrase (cynT) (Mycolicibacterium smegmatis (strain ATCC 700084 / mc(2)155) (Mycobacterium smegmatis)).